The sequence spans 693 residues: Iron-sulfur clusters transporter atm1, mitochondrial (693 aa).

The N-terminal 28 residues, 1 to 28, are a transit peptide targeting the mitochondrion; the sequence is MLERCPWKLISSPRNIPARSFLNSRGTY. At 29-118 the chain is on the mitochondrial matrix side; that stretch reads LVLRKSNILP…PKGKTNLKVR (90 aa). A helical membrane pass occupies residues 119–140; it reads VVSALALLVAAKILNVQVPFYF. The region spanning 119-409 is the ABC transmembrane type-1 domain; it reads VVSALALLVA…LGSVYREMRQ (291 aa). Over 141 to 163 the chain is Mitochondrial intermembrane; sequence KSIIDTMNTTLVQEVGALWSTVG. Residues 164–187 traverse the membrane as a helical segment; sequence AVVLGYGFARIFSTVFQELRNSVF. Residues 188–236 are Mitochondrial matrix-facing; that stretch reads AIVSQSAIRSVSSNVYQHLLNLDMNFHLSKQTGSITRAMDRGTKGISFI. Residues 237 to 260 traverse the membrane as a helical segment; sequence LSSMVLHIIPITLEIAMVSGILTY. Lys-261 is a topological domain (mitochondrial intermembrane). A helical transmembrane segment spans residues 262–282; the sequence is YGPSFSAIAATTVALYALFTV. Over 283-348 the chain is Mitochondrial matrix; it reads RTTSWRTVFR…ANVKVASSLA (66 aa). Glutathione-binding positions include 288–292 and 351–354; these read RTVFR and NSGQ. Residues 349–367 traverse the membrane as a helical segment; that stretch reads FLNSGQAIIFSTALTLMMY. Residues 368 to 382 lie on the Mitochondrial intermembrane side of the membrane; sequence MGCRGIVTSNLTVGD. The chain crosses the membrane as a helical span at residues 383-404; it reads LVMINQLVFQLSIPLNFLGSVY. Gly-401 is a binding site for glutathione. Topologically, residues 405-693 are mitochondrial matrix; sequence REMRQAFTDM…FGESNKSGDA (289 aa). Residues 443–679 enclose the ABC transporter domain; sequence IQFDNVHFSY…NSVYTSMWHS (237 aa). ATP is bound by residues Tyr-452 and 476-487; that span reads GASGCGKSTILR.

This sequence belongs to the ABC transporter superfamily. ABCB family. Heavy Metal importer (TC 3.A.1.210) subfamily. In terms of assembly, homodimer.

The protein localises to the mitochondrion inner membrane. In terms of biological role, performs an essential function in the generation of cytoplasmic iron-sulfur proteins by mediating the ATP-dependent export of Fe/S cluster precursors synthesized by nfs1 and other mitochondrial proteins. Hydrolyzes ATP. Binds glutathione and may function by transporting a glutathione-conjugated iron-sulfur compound. The sequence is that of Iron-sulfur clusters transporter atm1, mitochondrial from Schizosaccharomyces pombe (strain 972 / ATCC 24843) (Fission yeast).